Consider the following 876-residue polypeptide: Alanine--tRNA ligase (876 aa).

Residues His-564, His-568, Cys-666, and His-670 each coordinate Zn(2+).

It belongs to the class-II aminoacyl-tRNA synthetase family. It depends on Zn(2+) as a cofactor.

The protein localises to the cytoplasm. The enzyme catalyses tRNA(Ala) + L-alanine + ATP = L-alanyl-tRNA(Ala) + AMP + diphosphate. Catalyzes the attachment of alanine to tRNA(Ala) in a two-step reaction: alanine is first activated by ATP to form Ala-AMP and then transferred to the acceptor end of tRNA(Ala). Also edits incorrectly charged Ser-tRNA(Ala) and Gly-tRNA(Ala) via its editing domain. The protein is Alanine--tRNA ligase of Colwellia psychrerythraea (strain 34H / ATCC BAA-681) (Vibrio psychroerythus).